The chain runs to 761 residues: RNA-binding protein 12B (761 aa).

Phosphoserine is present on residues Ser-98, Ser-101, and Ser-112. Lys-114 is covalently cross-linked (Glycyl lysine isopeptide (Lys-Gly) (interchain with G-Cter in SUMO2)). The segment at 120 to 147 (SGYGSSINQDAGFHSNGTGHGNLRPRKT) is disordered. Lys-151 participates in a covalent cross-link: Glycyl lysine isopeptide (Lys-Gly) (interchain with G-Cter in SUMO2). Residues 155–230 (PYLFLRGLPY…RFIEVMQGSE (76 aa)) enclose the RRM 1 domain. Positions 247–262 (LRRSEEHSPPRGINDR) are enriched in basic and acidic residues. Positions 247–278 (LRRSEEHSPPRGINDRHFRKRSHSKSPRRTRS) are disordered. 2 positions are modified to phosphoserine: Ser-250 and Ser-254. The span at 263–278 (HFRKRSHSKSPRRTRS) shows a compositional bias: basic residues. Position 276 is a phosphothreonine (Thr-276). A phosphoserine mark is found at Ser-278, Ser-280, Ser-292, and Ser-294. In terms of domain architecture, RRM 2 spans 284–360 (FYVHLKNLSL…RPVHIDPISR (77 aa)). Lys-319 is subject to N6-acetyllysine. Lys-335 participates in a covalent cross-link: Glycyl lysine isopeptide (Lys-Gly) (interchain with G-Cter in SUMO2). Over residues 372–384 (KKRSGSPERDRPG) the composition is skewed to basic and acidic residues. The tract at residues 372-392 (KKRSGSPERDRPGHVSQKYSQ) is disordered. A Phosphoserine modification is found at Ser-377. The region spanning 400–477 (LCIYIRNFPF…TEVLLRLISE (78 aa)) is the RRM 3 domain. Glycyl lysine isopeptide (Lys-Gly) (interchain with G-Cter in SUMO2) cross-links involve residues Lys-514 and Lys-541. The span at 538 to 621 (DNFKHPQRDF…RHPREEDWRR (84 aa)) shows a compositional bias: basic and acidic residues. The segment at 538 to 690 (DNFKHPQRDF…THQMKTSGAL (153 aa)) is disordered. 2 positions are modified to phosphoserine: Ser-575 and Ser-591. A compositionally biased stretch (polar residues) spans 627 to 654 (LQSTSGGHPQSISGGHPQSISGARPRST). Over residues 661 to 672 (SISGGRLRSISG) the composition is skewed to low complexity.

This Pongo abelii (Sumatran orangutan) protein is RNA-binding protein 12B (RBM12B).